We begin with the raw amino-acid sequence, 680 residues long: DNA ligase (680 aa).

Residues 32 to 36 (DAVYD), 81 to 82 (SL), and Glu-115 contribute to the NAD(+) site. Lys-117 acts as the N6-AMP-lysine intermediate in catalysis. NAD(+)-binding residues include Arg-138, Glu-175, Lys-291, and Lys-315. 4 residues coordinate Zn(2+): Cys-409, Cys-412, Cys-427, and Cys-432. The region spanning 600–680 (ASEQHLKGLT…RLQAMLKDSP (81 aa)) is the BRCT domain.

The protein belongs to the NAD-dependent DNA ligase family. LigA subfamily. Mg(2+) serves as cofactor. Mn(2+) is required as a cofactor.

The catalysed reaction is NAD(+) + (deoxyribonucleotide)n-3'-hydroxyl + 5'-phospho-(deoxyribonucleotide)m = (deoxyribonucleotide)n+m + AMP + beta-nicotinamide D-nucleotide.. DNA ligase that catalyzes the formation of phosphodiester linkages between 5'-phosphoryl and 3'-hydroxyl groups in double-stranded DNA using NAD as a coenzyme and as the energy source for the reaction. It is essential for DNA replication and repair of damaged DNA. The chain is DNA ligase from Synechococcus sp. (strain CC9902).